The sequence spans 381 residues: MPKILVSAGEASGDLYASLVVQELRRIMPDAEFFGCTGPRLRAAGVRTIVDSADLAVVGLIEVVAHIPRIYGEFRKLLRAAREERPLLAILTDSPDFHLRVARKLHRQEVPVVYLVAPQAWAWRRGRVREMRRTIRRLLCIFPFEEEFFRRYGVPATYIGHPLAGLVHPALSREEFFKKHRLAAERPLVSVLPGSRRGEAARHIPALLDAVDRIYREQAVNVVLPASATTGVAFFQERMGNSPIRVIEGESWDAMAHSDLALAASGTVTVEAALLGTPMVTFYKVTGVSWLAGKFLVDIPFYSMVNLIAGRAVVPELMQSQMTGENLAREALRLLQGGRDREEMKAGLAQVKEKLAGRTGAPGRAALAIQEILEGQVTHVS.

It belongs to the LpxB family.

The catalysed reaction is a lipid X + a UDP-2-N,3-O-bis[(3R)-3-hydroxyacyl]-alpha-D-glucosamine = a lipid A disaccharide + UDP + H(+). It functions in the pathway bacterial outer membrane biogenesis; LPS lipid A biosynthesis. Condensation of UDP-2,3-diacylglucosamine and 2,3-diacylglucosamine-1-phosphate to form lipid A disaccharide, a precursor of lipid A, a phosphorylated glycolipid that anchors the lipopolysaccharide to the outer membrane of the cell. The chain is Lipid-A-disaccharide synthase from Solibacter usitatus (strain Ellin6076).